The sequence spans 1060 residues: RNA-binding protein 27 (1060 aa).

3 disordered regions span residues 80-143 (PLEP…DGKW), 160-278 (YDWR…PKRR), and 319-416 (PPPG…PPPL). Composition is skewed to basic and acidic residues over residues 84-102 (VKPE…KEEV) and 124-143 (SRSE…DGKW). Positions 165 to 185 (GRSKSRSKSRGLSRSRSRSRG) are enriched in basic residues. The span at 186-211 (RSKDRDPNRNVEHRERSKFKSERNDL) shows a compositional bias: basic and acidic residues. 2 stretches are compositionally biased toward low complexity: residues 225–235 (SSEQYSSGAQS) and 255–268 (SWSN…SSNS). Residues 273-301 (PPPKRRCRDYDERGFCVLGDLCQFDHGND) form a C3H1-type zinc finger. 2 stretches are compositionally biased toward pro residues: residues 319 to 356 (PPPG…PGPG) and 371 to 384 (QPPP…PRPP). Over residues 387–402 (QSSLINSRDQPGTSAV) the composition is skewed to polar residues. T447 is subject to Phosphothreonine. R455 is subject to Omega-N-methylarginine. Positions 572-594 (LTKKPWLGKQGNNNQSKPGFLRK) are disordered. An RRM domain is found at 600-674 (TKLEVKKIPQ…RFIRVLWHRE (75 aa)). Residues 754-775 (HASTNQSDTSHLLNQTGGSSGE) are disordered. Over residues 755 to 770 (ASTNQSDTSHLLNQTG) the composition is skewed to polar residues. Residues 810–887 (VQEVLKKKQE…KDELKTSSTV (78 aa)) adopt a coiled-coil conformation. S928 carries the phosphoserine modification. A disordered region spans residues 943-982 (GRGKTISSQGRGRGRGRGRGRGSLNHMVVDHRPKALPGGG). 2 positions are modified to phosphoserine: S1012 and S1020. The segment at 1014 to 1060 (HKPKVPSISTETEEEEVKEEETETSDLFLHDDDDEDEDEYESRSWRR) is disordered. Acidic residues-rich tracts occupy residues 1024 to 1037 (ETEE…ETET) and 1044 to 1053 (DDDDEDEDEY).

The protein resides in the cytoplasm. The protein localises to the nucleus speckle. Functionally, may be involved in the turnover of nuclear polyadenylated (pA+) RNA. In Mus musculus (Mouse), this protein is RNA-binding protein 27.